Reading from the N-terminus, the 603-residue chain is UvrABC system protein C (603 aa).

The region spanning 14-92 is the GIY-YIG domain; it reads ELPGVYRMLD…IKSLAPRYNI (79 aa). Positions 201–236 constitute a UVR domain; sequence QEVTRRLTKSMEEASAKLAFEQAAVFRDQIQSLHQV.

Belongs to the UvrC family. In terms of assembly, interacts with UvrB in an incision complex.

It localises to the cytoplasm. The UvrABC repair system catalyzes the recognition and processing of DNA lesions. UvrC both incises the 5' and 3' sides of the lesion. The N-terminal half is responsible for the 3' incision and the C-terminal half is responsible for the 5' incision. The protein is UvrABC system protein C of Dechloromonas aromatica (strain RCB).